Here is a 296-residue protein sequence, read N- to C-terminus: uncharacterized protein (296 aa).

A run of 2 helical transmembrane segments spans residues 82 to 102 (VVAP…WSVQ) and 117 to 137 (ISVL…SAIF).

The protein resides in the cell membrane. This is an uncharacterized protein from Sinorhizobium fredii (strain NBRC 101917 / NGR234).